The sequence spans 121 residues: Ribosome-binding factor A (121 aa).

The protein belongs to the RbfA family. In terms of assembly, monomer. Binds 30S ribosomal subunits, but not 50S ribosomal subunits or 70S ribosomes.

The protein localises to the cytoplasm. One of several proteins that assist in the late maturation steps of the functional core of the 30S ribosomal subunit. Associates with free 30S ribosomal subunits (but not with 30S subunits that are part of 70S ribosomes or polysomes). Required for efficient processing of 16S rRNA. May interact with the 5'-terminal helix region of 16S rRNA. This Paraburkholderia phytofirmans (strain DSM 17436 / LMG 22146 / PsJN) (Burkholderia phytofirmans) protein is Ribosome-binding factor A.